The sequence spans 198 residues: Large ribosomal subunit protein uL13 (198 aa).

The protein belongs to the universal ribosomal protein uL13 family.

This chain is Large ribosomal subunit protein uL13 (RPL13A), found in Tetrahymena thermophila (strain SB210).